The primary structure comprises 597 residues: MNASIPAITTGPLPASSKVHVQGTLHDIKVPMRQIEISDECPLNVYDSSGPYTDTAISIDIAKGLADSRGIWLRSRGDVEEYDGRTITAVDNGFAEGERLTPAFPNQRRPLRAVGDRAVTQMAYARAGIITPEMEFVAIRENIGRTQALKEERDGEDFGASIPDFVTPEFVRQEIASGRAIIPANINHRELEPMIIGRNFLVKINANIGNSAVTSSMEEEVEKMVWSIRWGADTVMDLSTGRNIHNIRDWIIRNAPVPIGTVPLYQALEKVGGIAEDLTWEIFRDTLIEQAEQGVDYFTIHAGVRLHMIPLTARRVTGIVSRGGSIMAKWCLHHHRESFLYEHFEEICDICRRYDVSFSLGDGLRPGSIADANDAAQFAELETLGELTKIAWAKDCQVMIEGPGHVPMHKIKTNMDKQLEHCHEAPFYTLGPLTTDIAPGYDHITSAIGAAMIGWFGTAMLCYVTPKEHLGLPDRNDVKTGVITYKLAAHAADLAKGHPGAQMRDDALSRARFEFRWEDQFNLGLDPDTARAMHDETLPKQAHKVSHFCSMCGPKFCSMKISHDIRAAAEKQDGMEQMAEKFREGGQLYVPVTEPAE.

Substrate is bound by residues Asn207, Met236, Tyr265, His301, 321 to 323 (SRG), 362 to 365 (DGLR), and Glu401. Residue His405 participates in Zn(2+) binding. Position 428 (Tyr428) interacts with substrate. His469 is a binding site for Zn(2+). Positions 549, 552, and 557 each coordinate [4Fe-4S] cluster.

It belongs to the ThiC family. Homodimer. Requires [4Fe-4S] cluster as cofactor.

The enzyme catalyses 5-amino-1-(5-phospho-beta-D-ribosyl)imidazole + S-adenosyl-L-methionine = 4-amino-2-methyl-5-(phosphooxymethyl)pyrimidine + CO + 5'-deoxyadenosine + formate + L-methionine + 3 H(+). Its pathway is cofactor biosynthesis; thiamine diphosphate biosynthesis. Its function is as follows. Catalyzes the synthesis of the hydroxymethylpyrimidine phosphate (HMP-P) moiety of thiamine from aminoimidazole ribotide (AIR) in a radical S-adenosyl-L-methionine (SAM)-dependent reaction. The chain is Phosphomethylpyrimidine synthase from Gluconobacter oxydans (strain 621H) (Gluconobacter suboxydans).